A 331-amino-acid chain; its full sequence is Protein RecA (331 aa).

Residue 61 to 68 participates in ATP binding; it reads GPESSGKT.

This sequence belongs to the RecA family.

It localises to the cytoplasm. Its function is as follows. Can catalyze the hydrolysis of ATP in the presence of single-stranded DNA, the ATP-dependent uptake of single-stranded DNA by duplex DNA, and the ATP-dependent hybridization of homologous single-stranded DNAs. It interacts with LexA causing its activation and leading to its autocatalytic cleavage. The polypeptide is Protein RecA (Mycoplasma mobile (strain ATCC 43663 / 163K / NCTC 11711) (Mesomycoplasma mobile)).